We begin with the raw amino-acid sequence, 510 residues long: MELSEWIDRHAGLEPGKTAIRFPERDLSYAQLAGLVERLASALKASGVAHRSCVAYLGYNSPEMLATLFACARLGALFMPLNWRLAGPEHRQLLADCPPSVLFVEPRFVAQIDAFRDALADVTLVAFDAPPQGWISYEALLERSGDAVPRDPQVGPQTPLLICYTSGTTGKPKGALLSQGALAWNAVNSIDLHELSADDRILTTLPLFHVGGLNNQTTPALSAGATVVLHPKFDADATFDAIEQERITLTVLVPAQLEMMIARPRWQSADLSSLRMITTGSTIVPERLIREVHRRGVPLVQIYGSTETCPIAAYVKPADAQRKAGSAGRAAPHCSLRIVGDDGHDVKPGATGEILVRGPNVMNAYWNDLQASAAVLKDGWFRTGDMGHQDGEGYLWVDGRKKEMIISGGENIYPAEIENLLGESPDIAEVAVVGRLDERWGEVVVAVVVPLEGRTLDAGHVLQLLEGRIARYKLPKEVVFLDELPRTALGKVRKDDVRQLVARKTFMEQT.

It belongs to the ATP-dependent AMP-binding enzyme family. In terms of assembly, monomer.

It carries out the reaction (indol-3-yl)acetate + ATP + CoA = (indol-3-yl)acetyl-CoA + AMP + diphosphate. The enzyme catalyses (indol-3-yl)acetate + ATP + H(+) = (indol-3-yl)acetyl-AMP + diphosphate. The catalysed reaction is (indol-3-yl)acetyl-AMP + CoA = (indol-3-yl)acetyl-CoA + AMP + H(+). With respect to regulation, inhibited by high concentrations of substrates, and by the synthetic auxin compound 2,4-dichlorophenoxyacetate (2,4-D), which does not serve as substrate. Its function is as follows. Involved in degradation of indoleacetate, the most common member of the auxin class of plant hormones. Highly specific indoleacetate-CoA ligase which catalyzes the ATP-dependent activation of indoleacetate (IAA) to indoleacetyl-CoA. Also activates some closely related compounds such as the non-physiological compound (2-naphthyl)acetate and phenylacetate, which seems to be a fortuitous substrate for IaaB. The chain is Indoleacetate--CoA ligase from Aromatoleum aromaticum (strain DSM 19018 / LMG 30748 / EbN1) (Azoarcus sp. (strain EbN1)).